Consider the following 216-residue polypeptide: Probable nicotinate-nucleotide adenylyltransferase (216 aa).

This sequence belongs to the NadD family.

The enzyme catalyses nicotinate beta-D-ribonucleotide + ATP + H(+) = deamido-NAD(+) + diphosphate. The protein operates within cofactor biosynthesis; NAD(+) biosynthesis; deamido-NAD(+) from nicotinate D-ribonucleotide: step 1/1. Catalyzes the reversible adenylation of nicotinate mononucleotide (NaMN) to nicotinic acid adenine dinucleotide (NaAD). The chain is Probable nicotinate-nucleotide adenylyltransferase from Maridesulfovibrio salexigens (strain ATCC 14822 / DSM 2638 / NCIMB 8403 / VKM B-1763) (Desulfovibrio salexigens).